A 100-amino-acid chain; its full sequence is Osteocalcin (100 aa).

Residues 1 to 23 (MRTPMLLALLALATLCLAGRADA) form the signal peptide. Positions 24 to 51 (KPGDAESGKGAAFVSKQEGSEVVKRLRR) are excised as a propeptide. The 47-residue stretch at 52 to 98 (YLDHWLGAPAPYPDPLEPKREVCELNPDCDELADHIGFQEAYRRFYG) folds into the Gla domain. P60 carries the 4-hydroxyproline modification. E68, E72, E75, and D81 together coordinate Ca(2+). 3 positions are modified to 4-carboxyglutamate: E68, E72, and E75. A disulfide bridge links C74 with C80.

It belongs to the osteocalcin/matrix Gla protein family. In terms of processing, gamma-carboxyglutamate residues are formed by vitamin K dependent carboxylation by GGCX. These residues are essential for the binding of calcium. Decarboxylation promotes the hormone activity.

The protein resides in the secreted. The carboxylated form is one of the main organic components of the bone matrix, which constitutes 1-2% of the total bone protein. It acts as a negative regulator of bone formation and is required to limit bone formation without impairing bone resorption or mineralization. The carboxylated form binds strongly to apatite and calcium. Functionally, the uncarboxylated form acts as a hormone secreted by osteoblasts, which regulates different cellular processes, such as energy metabolism, male fertility and brain development. Regulates of energy metabolism by acting as a hormone favoring pancreatic beta-cell proliferation, insulin secretion and sensitivity and energy expenditure. Uncarboxylated osteocalcin hormone also promotes testosterone production in the testes: acts as a ligand for G protein-coupled receptor GPRC6A at the surface of Leydig cells, initiating a signaling response that promotes the expression of enzymes required for testosterone synthesis in a CREB-dependent manner. Also acts as a regulator of brain development: osteocalcin hormone crosses the blood-brain barrier and acts as a ligand for GPR158 on neurons, initiating a signaling response that prevents neuronal apoptosis in the hippocampus, favors the synthesis of all monoamine neurotransmitters and inhibits that of gamma-aminobutyric acid (GABA). Osteocalcin also crosses the placenta during pregnancy and maternal osteocalcin is required for fetal brain development. The chain is Osteocalcin (BGLAP) from Bos taurus (Bovine).